A 358-amino-acid chain; its full sequence is Probable anti-sigma-M factor YhdL (358 aa).

Residues 74-96 (ISVLAVISTLMILPLCTLGSYLY) form a helical membrane-spanning segment.

The N-terminus of YhdL interacts with sigma-M. YhdL interacts specifically with YhdK.

It localises to the membrane. In Bacillus subtilis (strain 168), this protein is Probable anti-sigma-M factor YhdL (yhdL).